The chain runs to 422 residues: uncharacterized protein (422 aa).

The signal sequence occupies residues 1-23 (MLSLIPFTVCAFLALITSKGGSA).

As to expression, component of the acid-insoluble organic matrix of the aragonitic skeleton (at protein level).

It localises to the secreted. This is an uncharacterized protein from Acropora millepora (Staghorn coral).